The primary structure comprises 417 residues: Probable sugar-binding periplasmic protein (417 aa).

The N-terminal stretch at 1–21 is a signal peptide; sequence MLRKLLIGTALATSFAFSAHA.

Belongs to the bacterial solute-binding protein 1 family.

It localises to the periplasm. Part of a binding-protein-dependent transport system for a sugar. In Mesorhizobium japonicum (strain LMG 29417 / CECT 9101 / MAFF 303099) (Mesorhizobium loti (strain MAFF 303099)), this protein is Probable sugar-binding periplasmic protein.